The chain runs to 290 residues: Transcription cofactor vestigial-like protein 4 (290 aa).

N-acetylmethionine is present on Met-1. Residues 17–30 (ADDEKREAALRGEP) show a composition bias toward basic and acidic residues. 4 disordered regions span residues 17 to 65 (ADDE…PGDE), 85 to 106 (LNKTANGDCRRDPRERSRSPIE), 140 to 161 (LDASRPAGLSPTLTPGERQQNR), and 254 to 290 (AAKDGASSSPESASRRGQPASPSAHMVSHSHSPSVVS). The residue at position 52 (Ser-52) is a Phosphoserine. The segment covering 92–105 (DCRRDPRERSRSPI) has biased composition (basic and acidic residues). The residue at position 149 (Ser-149) is a Phosphoserine. A compositionally biased stretch (polar residues) spans 150 to 161 (PTLTPGERQQNR). Thr-153 is modified (phosphothreonine). Positions 272-290 (PASPSAHMVSHSHSPSVVS) are enriched in low complexity. Ser-274 is modified (phosphoserine).

Belongs to the vestigial family. In terms of assembly, interacts with TEFs. Interacts with IRF2BP2.

The protein resides in the nucleus. In terms of biological role, may act as a specific coactivator for the mammalian TEFs. The sequence is that of Transcription cofactor vestigial-like protein 4 from Homo sapiens (Human).